Reading from the N-terminus, the 147-residue chain is SsrA-binding protein (147 aa).

This sequence belongs to the SmpB family.

It is found in the cytoplasm. Functionally, required for rescue of stalled ribosomes mediated by trans-translation. Binds to transfer-messenger RNA (tmRNA), required for stable association of tmRNA with ribosomes. tmRNA and SmpB together mimic tRNA shape, replacing the anticodon stem-loop with SmpB. tmRNA is encoded by the ssrA gene; the 2 termini fold to resemble tRNA(Ala) and it encodes a 'tag peptide', a short internal open reading frame. During trans-translation Ala-aminoacylated tmRNA acts like a tRNA, entering the A-site of stalled ribosomes, displacing the stalled mRNA. The ribosome then switches to translate the ORF on the tmRNA; the nascent peptide is terminated with the 'tag peptide' encoded by the tmRNA and targeted for degradation. The ribosome is freed to recommence translation, which seems to be the essential function of trans-translation. The protein is SsrA-binding protein of Mycoplasmopsis agalactiae (strain NCTC 10123 / CIP 59.7 / PG2) (Mycoplasma agalactiae).